The primary structure comprises 315 residues: tRNA-dihydrouridine(16) synthase (315 aa).

FMN contacts are provided by residues 7–9 (PME) and glutamine 68. The active-site Proton donor is cysteine 98. FMN contacts are provided by residues lysine 139, 199 to 201 (NGE), and 223 to 224 (GR).

The protein belongs to the Dus family. DusC subfamily. It depends on FMN as a cofactor.

It catalyses the reaction 5,6-dihydrouridine(16) in tRNA + NADP(+) = uridine(16) in tRNA + NADPH + H(+). The catalysed reaction is 5,6-dihydrouridine(16) in tRNA + NAD(+) = uridine(16) in tRNA + NADH + H(+). Catalyzes the synthesis of 5,6-dihydrouridine (D), a modified base found in the D-loop of most tRNAs, via the reduction of the C5-C6 double bond in target uridines. Specifically modifies U16 in tRNAs. The sequence is that of tRNA-dihydrouridine(16) synthase from Aquipseudomonas alcaligenes (Pseudomonas alcaligenes).